The following is a 215-amino-acid chain: Probable phosphoglycerate mutase GpmB (215 aa).

Residues 8–15 (RHGETQWN), 21–22 (QG), Arg58, 82–85 (ELDM), 104–105 (RR), and 151–152 (GI) each bind substrate. The Tele-phosphohistidine intermediate role is filled by His9. The active-site Proton donor/acceptor is Glu82.

This sequence belongs to the phosphoglycerate mutase family. GpmB subfamily.

The catalysed reaction is (2R)-2-phosphoglycerate = (2R)-3-phosphoglycerate. It functions in the pathway carbohydrate degradation; glycolysis; pyruvate from D-glyceraldehyde 3-phosphate: step 3/5. The protein is Probable phosphoglycerate mutase GpmB of Enterobacter sp. (strain 638).